Reading from the N-terminus, the 270-residue chain is 3-phenylpropionate-dihydrodiol/cinnamic acid-dihydrodiol dehydrogenase (270 aa).

NAD(+) is bound at residue 10–34; the sequence is FITGGGSGLGLALVERFIEEGAQVA. Substrate is bound at residue Ser-143. Tyr-156 (proton acceptor) is an active-site residue.

The protein belongs to the short-chain dehydrogenases/reductases (SDR) family.

It carries out the reaction 3-(cis-5,6-dihydroxycyclohexa-1,3-dien-1-yl)propanoate + NAD(+) = 3-(2,3-dihydroxyphenyl)propanoate + NADH + H(+). The catalysed reaction is (2E)-3-(cis-5,6-dihydroxycyclohexa-1,3-dien-1-yl)prop-2-enoate + NAD(+) = (2E)-3-(2,3-dihydroxyphenyl)prop-2-enoate + NADH + H(+). Its pathway is aromatic compound metabolism; 3-phenylpropanoate degradation. Functionally, converts 3-phenylpropionate-dihydrodiol (PP-dihydrodiol) and cinnamic acid-dihydrodiol (CI-dihydrodiol) into 3-(2,3-dihydroxylphenyl)propanoic acid (DHPP) and 2,3-dihydroxicinnamic acid (DHCI), respectively. The polypeptide is 3-phenylpropionate-dihydrodiol/cinnamic acid-dihydrodiol dehydrogenase (Escherichia coli O157:H7).